Reading from the N-terminus, the 194-residue chain is Peptidyl-tRNA hydrolase (194 aa).

Tyr16 lines the tRNA pocket. His21 functions as the Proton acceptor in the catalytic mechanism. TRNA contacts are provided by Phe67, Asn69, and Asn115.

Belongs to the PTH family. As to quaternary structure, monomer.

It localises to the cytoplasm. The catalysed reaction is an N-acyl-L-alpha-aminoacyl-tRNA + H2O = an N-acyl-L-amino acid + a tRNA + H(+). In terms of biological role, hydrolyzes ribosome-free peptidyl-tRNAs (with 1 or more amino acids incorporated), which drop off the ribosome during protein synthesis, or as a result of ribosome stalling. Catalyzes the release of premature peptidyl moieties from peptidyl-tRNA molecules trapped in stalled 50S ribosomal subunits, and thus maintains levels of free tRNAs and 50S ribosomes. This is Peptidyl-tRNA hydrolase from Shigella boydii serotype 18 (strain CDC 3083-94 / BS512).